The chain runs to 919 residues: DNA double-strand break repair Rad50 ATPase (919 aa).

Residues 33–39 (NGAGKST) and glutamine 143 each bind ATP. Coiled-coil stretches lie at residues 208–268 (MTLR…MLVN), 315–379 (HEVA…RRYT), and 414–458 (ESVL…LEES). A Zinc-hook domain is found at 417–516 (LERLDAVIND…EASRLQDKRR (100 aa)). Residues cysteine 464 and cysteine 467 each contribute to the Zn(2+) site. Coiled-coil stretches lie at residues 486–515 (EAER…QDKR), 541–595 (EDLA…LQRL), and 635–749 (AYRS…RKAS).

The protein belongs to the SMC family. RAD50 subfamily. As to quaternary structure, homodimer. Forms a heterotetramer composed of two Mre11 subunits and two Rad50 subunits. It depends on Zn(2+) as a cofactor.

In terms of biological role, part of the Rad50/Mre11 complex, which is involved in the early steps of DNA double-strand break (DSB) repair. The complex may facilitate opening of the processed DNA ends to aid in the recruitment of HerA and NurA. Rad50 controls the balance between DNA end bridging and DNA resection via ATP-dependent structural rearrangements of the Rad50/Mre11 complex. This is DNA double-strand break repair Rad50 ATPase from Aeropyrum pernix (strain ATCC 700893 / DSM 11879 / JCM 9820 / NBRC 100138 / K1).